A 277-amino-acid polypeptide reads, in one-letter code: L-aspartate oxidase (277 aa).

Arginine 23 (proton donor/acceptor) is an active-site residue. FAD-binding positions include glutamate 106 and 122–123 (SL). Disordered regions lie at residues 142 to 161 (LRRG…PPPA) and 234 to 277 (DYPA…ETRS). Residues 146-161 (WPPPAPPDLSPRPPPA) are compositionally biased toward pro residues.

Belongs to the FAD-dependent oxidoreductase 2 family. NadB subfamily. FAD serves as cofactor.

It localises to the cytoplasm. The enzyme catalyses L-aspartate + O2 = iminosuccinate + H2O2. Its pathway is cofactor biosynthesis; NAD(+) biosynthesis; iminoaspartate from L-aspartate (oxidase route): step 1/1. Catalyzes the oxidation of L-aspartate to iminoaspartate, the first step in the de novo biosynthesis of NAD(+). This Rhodospirillum rubrum protein is L-aspartate oxidase (nadB).